We begin with the raw amino-acid sequence, 364 residues long: Peroxisomal membrane protein PEX16 (364 aa).

A Phosphoserine modification is found at serine 200.

Belongs to the peroxin-16 family.

It localises to the peroxisome membrane. Its function is as follows. Involved in the biogenesis of peroxisomes. This chain is Peroxisomal membrane protein PEX16 (pex16), found in Schizosaccharomyces pombe (strain 972 / ATCC 24843) (Fission yeast).